The sequence spans 488 residues: Malonate-semialdehyde dehydrogenase (488 aa).

Residues Ala-150, Phe-152, Lys-176, Glu-179, Arg-180, Ser-229, and Thr-251 each coordinate NAD(+). Cys-284 serves as the catalytic Nucleophile. Glu-382 provides a ligand contact to NAD(+).

Belongs to the aldehyde dehydrogenase family. IolA subfamily. As to quaternary structure, homotetramer.

It carries out the reaction 3-oxopropanoate + NAD(+) + CoA + H2O = hydrogencarbonate + acetyl-CoA + NADH + H(+). The enzyme catalyses 2-methyl-3-oxopropanoate + NAD(+) + CoA + H2O = propanoyl-CoA + hydrogencarbonate + NADH + H(+). It functions in the pathway polyol metabolism; myo-inositol degradation into acetyl-CoA; acetyl-CoA from myo-inositol: step 7/7. Catalyzes the oxidation of malonate semialdehyde (MSA) and methylmalonate semialdehyde (MMSA) into acetyl-CoA and propanoyl-CoA, respectively. Is involved in a myo-inositol catabolic pathway. Bicarbonate, and not CO2, is the end-product of the enzymatic reaction. The polypeptide is Malonate-semialdehyde dehydrogenase (Listeria monocytogenes serotype 4b (strain F2365)).